The following is a 554-amino-acid chain: (+)-delta-cadinene synthase isozyme XC1 (554 aa).

A compositionally biased stretch (low complexity) spans 1-16 (MASQVSQMPSSSPLSS). The tract at residues 1–23 (MASQVSQMPSSSPLSSNKDEMRP) is disordered. The Mg(2+) site is built by D307, D311, D451, and E455. A DDXXD motif motif is present at residues 307-311 (DDTYD).

This sequence belongs to the terpene synthase family. The cofactor is Mg(2+).

It carries out the reaction (2E,6E)-farnesyl diphosphate = (1S,8aR)-delta-cadinene + diphosphate. Its pathway is secondary metabolite biosynthesis; terpenoid biosynthesis. Its function is as follows. Responsible for the cyclization of trans,trans-farnesyl diphosphate (FPP) to (+)-delta cadinene. The chain is (+)-delta-cadinene synthase isozyme XC1 from Gossypium arboreum (Tree cotton).